We begin with the raw amino-acid sequence, 303 residues long: Ribosomal protein uL3 glutamine methyltransferase (303 aa).

The protein belongs to the protein N5-glutamine methyltransferase family. PrmB subfamily.

It catalyses the reaction L-glutaminyl-[ribosomal protein uL3] + S-adenosyl-L-methionine = N(5)-methyl-L-glutaminyl-[ribosomal protein uL3] + S-adenosyl-L-homocysteine + H(+). Methylates large ribosomal subunit protein uL3 on a specific glutamine residue. The chain is Ribosomal protein uL3 glutamine methyltransferase from Neisseria meningitidis serogroup A / serotype 4A (strain DSM 15465 / Z2491).